A 501-amino-acid polypeptide reads, in one-letter code: Ribose import ATP-binding protein RbsA 1 (501 aa).

ABC transporter domains lie at 5 to 241 (LQLK…VGRK) and 252 to 495 (APGD…VGKL). 37-44 (GENGAGKS) lines the ATP pocket.

This sequence belongs to the ABC transporter superfamily. Ribose importer (TC 3.A.1.2.1) family. The complex is composed of an ATP-binding protein (RbsA), two transmembrane proteins (RbsC) and a solute-binding protein (RbsB).

The protein resides in the cell inner membrane. The catalysed reaction is D-ribose(out) + ATP + H2O = D-ribose(in) + ADP + phosphate + H(+). In terms of biological role, part of the ABC transporter complex RbsABC involved in ribose import. Responsible for energy coupling to the transport system. This is Ribose import ATP-binding protein RbsA 1 from Escherichia coli O157:H7.